Consider the following 349-residue polypeptide: S-adenosylmethionine:tRNA ribosyltransferase-isomerase (349 aa).

It belongs to the QueA family. As to quaternary structure, monomer.

Its subcellular location is the cytoplasm. The enzyme catalyses 7-aminomethyl-7-carbaguanosine(34) in tRNA + S-adenosyl-L-methionine = epoxyqueuosine(34) in tRNA + adenine + L-methionine + 2 H(+). The protein operates within tRNA modification; tRNA-queuosine biosynthesis. Functionally, transfers and isomerizes the ribose moiety from AdoMet to the 7-aminomethyl group of 7-deazaguanine (preQ1-tRNA) to give epoxyqueuosine (oQ-tRNA). This Cupriavidus pinatubonensis (strain JMP 134 / LMG 1197) (Cupriavidus necator (strain JMP 134)) protein is S-adenosylmethionine:tRNA ribosyltransferase-isomerase.